Reading from the N-terminus, the 1097-residue chain is Importin-5 (1097 aa).

The residue at position 2 (alanine 2) is an N-acetylalanine. HEAT repeat units lie at residues 5 to 38, 43 to 77, 95 to 122, 130 to 157, 167 to 201, 210 to 246, 254 to 289, 298 to 350, 352 to 386, 390 to 430, 432 to 472, 475 to 523, 525 to 568, 570 to 615, 617 to 692, 695 to 737, 741 to 780, 787 to 853, 856 to 895, 903 to 935, 943 to 983, 990 to 1021, 1032 to 1067, and 1070 to 1093; these read AAEQ…NIPG, TFLL…FDEV, MIIQ…NLID, PEGL…IFWN, QHYL…AAFI, LFKH…IADT, HLEA…LSET, TNIV…ACGL, GKLV…SAIG, HQQM…ATDF, PGFQ…FTED, KSLL…ADTA, EKFV…GLAV, KEKF…CKIL, KEFQ…AKEL, GFVE…ARVR, YLTQ…IEVM, NEHF…FSSY, KVLP…IEHC, AEYF…MAQY, FCTE…MKFK, EEVL…DLIE, NTNL…VVRQ, and TSGG…IQEL. The region spanning 28–99 is the Importin N-terminal domain; it reads QAEETYENIP…KSELLMIIQM (72 aa). The interval 325 to 375 is ran-GTP binding; the sequence is DELEDDDFDSNAVAGESALDRMACGLGGKLVLPMIKEHIMQMLQNPDWKYR. Residue serine 827 is modified to Phosphoserine.

It belongs to the importin beta family. Importin beta-3 subfamily. Interacts with RPS7 and RPL5. Interacts with RPL23A (via BIB domain). Interacts with H2A, H2B, H3 and H4 histones. Interacts with CPEB3; this mediates CPEB3 nuclear import following neuronal stimulation which enhances the interaction in a RAN-regulated manner. Interacts with AIFM2; this interaction likely mediates the translocation of AIFM2 into the nucleus upon oxidative stress. Interacts with STX3 (isoform 3). Interacts with SRP19. As to quaternary structure, (Microbial infection) Interacts with HIV-1 Rev.

The protein resides in the cytoplasm. It localises to the nucleus. The protein localises to the nucleolus. Functions in nuclear protein import as nuclear transport receptor. Serves as receptor for nuclear localization signals (NLS) in cargo substrates. Is thought to mediate docking of the importin/substrate complex to the nuclear pore complex (NPC) through binding to nucleoporin and the complex is subsequently translocated through the pore by an energy requiring, Ran-dependent mechanism. At the nucleoplasmic side of the NPC, Ran binds to the importin, the importin/substrate complex dissociates and importin is re-exported from the nucleus to the cytoplasm where GTP hydrolysis releases Ran. The directionality of nuclear import is thought to be conferred by an asymmetric distribution of the GTP- and GDP-bound forms of Ran between the cytoplasm and nucleus. Mediates the nuclear import of ribosomal proteins RPL23A, RPS7 and RPL5. In vitro, mediates nuclear import of H2A, H2B, H3 and H4 histones. Binds to CPEB3 and mediates its nuclear import following neuronal stimulation. In case of HIV-1 infection, binds and mediates the nuclear import of HIV-1 Rev. This chain is Importin-5 (IPO5), found in Homo sapiens (Human).